Consider the following 325-residue polypeptide: Pseudouridylate synthase TRUB2, mitochondrial (325 aa).

Asp-101 acts as the Nucleophile in catalysis. The segment at 292 to 325 (QTEGVSRGNPDREAAEGPIPGPSRGAEGEGELRA) is disordered.

This sequence belongs to the pseudouridine synthase TruB family.

Its subcellular location is the mitochondrion matrix. It catalyses the reaction a uridine in mRNA = a pseudouridine in mRNA. The catalysed reaction is uridine(55) in tRNA = pseudouridine(55) in tRNA. In terms of biological role, minor enzyme contributing to the isomerization of uridine to pseudouridine (pseudouridylation) of specific mitochondrial mRNAs (mt-mRNAs) such as COXI and COXIII mt-mRNAs, modulating the efficiency of mitochondrial protein synthesis without changes in transcript abundance or stability. Also catalyzes pseudouridylation of some tRNAs, including synthesis of pseudouridine(55) from uracil-55, in the psi GC loop of a subset of tRNAs. The sequence is that of Pseudouridylate synthase TRUB2, mitochondrial from Xenopus tropicalis (Western clawed frog).